The primary structure comprises 216 residues: RNA chaperone ProQ (216 aa).

A compositionally biased stretch (basic and acidic residues) spans 105–115 (ESKAKVAEKRK). A disordered region spans residues 105–159 (ESKAKVAEKRKAQNAAKPGAKKSYKSKTVPAFKSSPKGTNQDNVKPKAKLPPPEK).

Belongs to the ProQ family.

It is found in the cytoplasm. Functionally, RNA chaperone with significant RNA binding, RNA strand exchange and RNA duplexing activities. The chain is RNA chaperone ProQ from Pseudoalteromonas atlantica (strain T6c / ATCC BAA-1087).